Consider the following 261-residue polypeptide: MVHQSHAYHMLKPSPWPLTGALSALLMTSGLAMWFHFHSTTLLLTGMLTNALTMYQWWRDVVRESTYQGHHTLPVQKGLRYGMILFITSEVFFFAGFFWAFYHSSLAPTPQLGGHWPPTGITPLNPLEVPLLNTAVLLASGVSITWAHHSLMENNRTQMIQALLITILLGIYFTLLQASEYIEAPFTISDGIYGSTFFMTTGFHGLHVIIGSTFLTVCLSCQLLFHFTSKHHFGFEAAAWYWHFVDVVWLFLYVSIYWWGS.

Residues 1–15 (MVHQSHAYHMLKPSP) are Mitochondrial matrix-facing. Residues 16–34 (WPLTGALSALLMTSGLAMW) form a helical membrane-spanning segment. Residues 35–40 (FHFHST) are Mitochondrial intermembrane-facing. Residues 41-66 (TLLLTGMLTNALTMYQWWRDVVREST) form a helical membrane-spanning segment. Residues 67–72 (YQGHHT) are Mitochondrial matrix-facing. Residues 73–105 (LPVQKGLRYGMILFITSEVFFFAGFFWAFYHSS) form a helical membrane-spanning segment. Topologically, residues 106-128 (LAPTPQLGGHWPPTGITPLNPLE) are mitochondrial intermembrane. The chain crosses the membrane as a helical span at residues 129 to 152 (VPLLNTAVLLASGVSITWAHHSLM). Topologically, residues 153–155 (ENN) are mitochondrial matrix. Residues 156-183 (RTQMIQALLITILLGIYFTLLQASEYIE) traverse the membrane as a helical segment. Residues 184–190 (APFTISD) are Mitochondrial intermembrane-facing. The chain crosses the membrane as a helical span at residues 191-223 (GIYGSTFFMTTGFHGLHVIIGSTFLTVCLSCQL). The Mitochondrial matrix segment spans residues 224 to 232 (LFHFTSKHH). Residues 233 to 256 (FGFEAAAWYWHFVDVVWLFLYVSI) form a helical membrane-spanning segment. Topologically, residues 257–261 (YWWGS) are mitochondrial intermembrane.

Belongs to the cytochrome c oxidase subunit 3 family. As to quaternary structure, component of the cytochrome c oxidase (complex IV, CIV), a multisubunit enzyme composed of 14 subunits. The complex is composed of a catalytic core of 3 subunits MT-CO1, MT-CO2 and MT-CO3, encoded in the mitochondrial DNA, and 11 supernumerary subunits COX4I, COX5A, COX5B, COX6A, COX6B, COX6C, COX7A, COX7B, COX7C, COX8 and NDUFA4, which are encoded in the nuclear genome. The complex exists as a monomer or a dimer and forms supercomplexes (SCs) in the inner mitochondrial membrane with NADH-ubiquinone oxidoreductase (complex I, CI) and ubiquinol-cytochrome c oxidoreductase (cytochrome b-c1 complex, complex III, CIII), resulting in different assemblies (supercomplex SCI(1)III(2)IV(1) and megacomplex MCI(2)III(2)IV(2)).

It is found in the mitochondrion inner membrane. It carries out the reaction 4 Fe(II)-[cytochrome c] + O2 + 8 H(+)(in) = 4 Fe(III)-[cytochrome c] + 2 H2O + 4 H(+)(out). Functionally, component of the cytochrome c oxidase, the last enzyme in the mitochondrial electron transport chain which drives oxidative phosphorylation. The respiratory chain contains 3 multisubunit complexes succinate dehydrogenase (complex II, CII), ubiquinol-cytochrome c oxidoreductase (cytochrome b-c1 complex, complex III, CIII) and cytochrome c oxidase (complex IV, CIV), that cooperate to transfer electrons derived from NADH and succinate to molecular oxygen, creating an electrochemical gradient over the inner membrane that drives transmembrane transport and the ATP synthase. Cytochrome c oxidase is the component of the respiratory chain that catalyzes the reduction of oxygen to water. Electrons originating from reduced cytochrome c in the intermembrane space (IMS) are transferred via the dinuclear copper A center (CU(A)) of subunit 2 and heme A of subunit 1 to the active site in subunit 1, a binuclear center (BNC) formed by heme A3 and copper B (CU(B)). The BNC reduces molecular oxygen to 2 water molecules using 4 electrons from cytochrome c in the IMS and 4 protons from the mitochondrial matrix. The chain is Cytochrome c oxidase subunit 3 (MT-CO3) from Pongo pygmaeus (Bornean orangutan).